Consider the following 85-residue polypeptide: Toxin Cll7 (85 aa).

The first 19 residues, 1–19, serve as a signal peptide directing secretion; the sequence is MNSLLMITACLVLFGTVWA. In terms of domain architecture, LCN-type CS-alpha/beta spans 20–83; the sequence is KEGYLVNTYT…TWPLPNKTCG (64 aa). Intrachain disulfides connect Cys-31-Cys-82, Cys-35-Cys-58, Cys-44-Cys-63, and Cys-48-Cys-65.

This sequence belongs to the long (4 C-C) scorpion toxin superfamily. Sodium channel inhibitor family. Beta subfamily. As to expression, expressed by the venom gland.

It localises to the secreted. Its function is as follows. Beta toxins bind voltage-independently at site-4 of sodium channels (Nav) and shift the voltage of activation toward more negative potentials thereby affecting sodium channel activation and promoting spontaneous and repetitive firing. The polypeptide is Toxin Cll7 (Centruroides limpidus (Mexican scorpion)).